The chain runs to 204 residues: Large ribosomal subunit protein bL25 (204 aa).

S123 bears the Phosphoserine mark.

Belongs to the bacterial ribosomal protein bL25 family. CTC subfamily. Part of the 50S ribosomal subunit; part of the 5S rRNA/L5/L18/L25 subcomplex. Contacts the 5S rRNA. Binds to the 5S rRNA independently of L5 and L18.

This is one of the proteins that binds to the 5S RNA in the ribosome where it forms part of the central protuberance. This is Large ribosomal subunit protein bL25 from Pseudomonas aeruginosa (strain UCBPP-PA14).